The following is a 580-amino-acid chain: mRNA-decapping enzyme 1A (580 aa).

S62 bears the Phosphoserine mark. The segment covering 132 to 141 (RSQQAARDKQ) has biased composition (basic and acidic residues). 3 disordered regions span residues 132–154 (RSQQAARDKQSPNQANGCSDHRP), 172–209 (QMGDSNISSPGLQPSTQISNLGSTETLEETPSGLQDKS), and 245–276 (LPGDASQKEPSSFLPFSFEPSGGGPQSENMGI). Phosphoserine occurs at positions 142, 179, and 180. A compositionally biased stretch (polar residues) spans 173-196 (MGDSNISSPGLQPSTQISNLGSTE). Residues 253–264 (EPSSFLPFSFEP) show a composition bias toward low complexity. Phosphoserine is present on residues S319 and S334. Residues 343–359 (QAVKTTPRQRSPLSSQP) are compositionally biased toward polar residues. Residues 343 to 371 (QAVKTTPRQRSPLSSQPVPELSQASLAAS) form a disordered region. T348 carries the post-translational modification Phosphothreonine. S353 is modified (phosphoserine). Residue R376 is modified to Asymmetric dimethylarginine. T401 is subject to Phosphothreonine. Phosphoserine is present on residues S422, S520, S521, and S523. Residues 510–533 (TRSSDLERKASSPSPLTVGTSENQ) are disordered. Polar residues predominate over residues 520-531 (SSPSPLTVGTSE). Phosphothreonine is present on residues T526 and T529.

The protein belongs to the DCP1 family. Forms a complex with EDC3, DCP2, DDX6 and EDC4/HEDLS, within this complex directly interacts with EDC3. Part of a cytoplasmic complex containing proteins involved in mRNA decay, including XRN1 and LSM1. Interacts with DCP1B. Interacts with DCP2. Interacts with DDX17 in an RNA-independent manner. Interacts with PNRC2. Interacts with SMAD4. Interacts with UPF1. Interacts with ZC3HAV1. Interacts with ZFP36L1. Interacts with NBDY. Interacts with DHX34; the interaction is RNA-independent. Post-translationally, (Microbial infection) Cleaved by porcine reproductive and respiratory syndrome virus serine protease nsp4 after Glu-238. The cleavage inhibits DCP1A function.

The protein localises to the cytoplasm. The protein resides in the P-body. It localises to the nucleus. The enzyme catalyses a 5'-end (N(7)-methyl 5'-triphosphoguanosine)-ribonucleoside in mRNA + H2O = N(7)-methyl-GDP + a 5'-end phospho-ribonucleoside in mRNA + 2 H(+). Necessary for the degradation of mRNAs, both in normal mRNA turnover and in nonsense-mediated mRNA decay. Removes the 7-methyl guanine cap structure from mRNA molecules, yielding a 5'-phosphorylated mRNA fragment and 7m-GDP. Contributes to the transactivation of target genes after stimulation by TGFB1. Essential for embryonic development. The protein is mRNA-decapping enzyme 1A (DCP1A) of Sus scrofa (Pig).